Consider the following 87-residue polypeptide: Spermatid-specific protein S1 (87 aa).

The interval 1–36 is disordered; the sequence is TKSRYRNRRSRPRRRYGRRMRKTRCRRKGRRISRRP.

The protein resides in the nucleus. The protein localises to the chromosome. In terms of biological role, involved in nuclear basic protein transition: histones are replaced by spermatid specific proteins which are themselves replaced by protamines in late spermatids. The polypeptide is Spermatid-specific protein S1 (Scyliorhinus canicula (Small-spotted catshark)).